The sequence spans 150 residues: Keratin-associated protein 15-1 (150 aa).

This sequence belongs to the PMG family. As to quaternary structure, interacts with hair keratins. In terms of tissue distribution, expressed at high levels in skin and at lower levels in the developing mammary gland.

In terms of biological role, in the hair cortex, hair keratin intermediate filaments are embedded in an interfilamentous matrix, consisting of hair keratin-associated proteins (KRTAP), which are essential for the formation of a rigid and resistant hair shaft through their extensive disulfide bond cross-linking with abundant cysteine residues of hair keratins. The matrix proteins include the high-sulfur and high-glycine-tyrosine keratins. The sequence is that of Keratin-associated protein 15-1 from Mus musculus (Mouse).